The sequence spans 294 residues: Nucleotide-binding protein CLK_2809 (294 aa).

8-15 (GLSGAGKT) contributes to the ATP binding site. 59-62 (DIRG) provides a ligand contact to GTP.

This sequence belongs to the RapZ-like family.

Its function is as follows. Displays ATPase and GTPase activities. The protein is Nucleotide-binding protein CLK_2809 of Clostridium botulinum (strain Loch Maree / Type A3).